A 215-amino-acid polypeptide reads, in one-letter code: Cardiolipin synthase (CMP-forming) (215 aa).

The next 5 membrane-spanning stretches (helical) occupy residues 29-49, 60-80, 117-137, 158-178, and 179-199; these read IPNI…WLIL, GWAL…GKLA, LWLT…VGIL, LMYA…ASLA, and AVFG…AGVL.

The protein belongs to the CDP-alcohol phosphatidyltransferase class-I family. A divalent metal cation serves as cofactor.

It is found in the cell membrane. It catalyses the reaction a CDP-1,2-diacyl-sn-glycerol + a 1,2-diacyl-sn-glycero-3-phospho-(1'-sn-glycerol) = a cardiolipin + CMP + H(+). Catalyzes the synthesis of cardiolipin (CL) (diphosphatidylglycerol) by specifically transferring a phosphatidyl group from CDP-diacylglycerol to phosphatidylglycerol (PG). The protein is Cardiolipin synthase (CMP-forming) of Streptomyces coelicolor (strain ATCC BAA-471 / A3(2) / M145).